The following is a 131-amino-acid chain: Small ribosomal subunit protein bS6 (131 aa).

Residues 96-131 (VTAPSPMMKEEKSKSLLAKDEAAAPAPAPATEQATA) form a disordered region. Residues 103–117 (MKEEKSKSLLAKDEA) are compositionally biased toward basic and acidic residues. Positions 118–131 (AAPAPAPATEQATA) are enriched in low complexity.

It belongs to the bacterial ribosomal protein bS6 family.

Its function is as follows. Binds together with bS18 to 16S ribosomal RNA. This Methylobacillus flagellatus (strain ATCC 51484 / DSM 6875 / VKM B-1610 / KT) protein is Small ribosomal subunit protein bS6.